Reading from the N-terminus, the 316-residue chain is Ribosomal RNA small subunit methyltransferase H (316 aa).

Residues 32–34 (AGH), Asp-52, Phe-79, Asp-100, and Gln-107 contribute to the S-adenosyl-L-methionine site.

This sequence belongs to the methyltransferase superfamily. RsmH family.

It localises to the cytoplasm. The enzyme catalyses cytidine(1402) in 16S rRNA + S-adenosyl-L-methionine = N(4)-methylcytidine(1402) in 16S rRNA + S-adenosyl-L-homocysteine + H(+). In terms of biological role, specifically methylates the N4 position of cytidine in position 1402 (C1402) of 16S rRNA. The polypeptide is Ribosomal RNA small subunit methyltransferase H (Lysinibacillus sphaericus (strain C3-41)).